The chain runs to 412 residues: Argininosuccinate synthase (412 aa).

Residues 10-18 and Ala-36 contribute to the ATP site; that span reads AYSGGLDTS. Residues Tyr-87 and Ser-92 each contribute to the L-citrulline site. Tyr-87 is subject to Phosphotyrosine. Lys-112 is subject to N6-acetyllysine. The residue at position 113 (Tyr-113) is a Phosphotyrosine. An ATP-binding site is contributed by 115–123; it reads SHGATGKGN. The L-aspartate site is built by Thr-119, Asn-123, and Asp-124. L-citrulline is bound at residue Asn-123. Position 127 (Arg-127) interacts with L-citrulline. N6-acetyllysine; by CLOCK is present on residues Lys-165 and Lys-176. Residues Ser-180 and Ser-189 each contribute to the L-citrulline site. Residue Ser-180 is modified to Phosphoserine. At Ser-219 the chain carries Phosphoserine. Residues Glu-270 and Tyr-282 each contribute to the L-citrulline site.

It belongs to the argininosuccinate synthase family. Type 1 subfamily. In terms of assembly, homotetramer. Interacts with NMRAL1. Interacts with CLOCK; in a circadian manner. Forms tissue-specific complexes with ASL, SLC7A1, HSP90AA1 and nitric oxide synthase NOS1, NOS2 or NOS3; the complex regulates cell-autonomous L-arginine synthesis and citrulline recycling while channeling extracellular L-arginine to nitric oxide synthesis pathway. Post-translationally, acetylated by CLOCK in a circadian manner which negatively regulates its enzyme activity. Deacetylated by histone deacetylases.

The protein resides in the cytoplasm. It is found in the cytosol. The enzyme catalyses L-citrulline + L-aspartate + ATP = 2-(N(omega)-L-arginino)succinate + AMP + diphosphate + H(+). The protein operates within amino-acid biosynthesis; L-arginine biosynthesis; L-arginine from L-ornithine and carbamoyl phosphate: step 2/3. It functions in the pathway nitrogen metabolism; urea cycle; (N(omega)-L-arginino)succinate from L-aspartate and L-citrulline: step 1/1. In terms of biological role, one of the enzymes of the urea cycle, the metabolic pathway transforming neurotoxic amonia produced by protein catabolism into inocuous urea in the liver of ureotelic animals. Catalyzes the formation of arginosuccinate from aspartate, citrulline and ATP and together with ASL it is responsible for the biosynthesis of arginine in most body tissues. The sequence is that of Argininosuccinate synthase from Bos taurus (Bovine).